The following is a 212-amino-acid chain: Protein-L-isoaspartate O-methyltransferase (212 aa).

Residue Ser62 is part of the active site.

This sequence belongs to the methyltransferase superfamily. L-isoaspartyl/D-aspartyl protein methyltransferase family.

It is found in the cytoplasm. The catalysed reaction is [protein]-L-isoaspartate + S-adenosyl-L-methionine = [protein]-L-isoaspartate alpha-methyl ester + S-adenosyl-L-homocysteine. Its function is as follows. Catalyzes the methyl esterification of L-isoaspartyl residues in peptides and proteins that result from spontaneous decomposition of normal L-aspartyl and L-asparaginyl residues. It plays a role in the repair and/or degradation of damaged proteins. The chain is Protein-L-isoaspartate O-methyltransferase from Pseudoalteromonas translucida (strain TAC 125).